The sequence spans 323 residues: tRNA dimethylallyltransferase (323 aa).

Position 12–19 (12–19 (GPTAAGKT)) interacts with ATP. Position 14–19 (14–19 (TAAGKT)) interacts with substrate. 2 interaction with substrate tRNA regions span residues 37–40 (DSAL) and 161–165 (QRLMR).

The protein belongs to the IPP transferase family. As to quaternary structure, monomer. Requires Mg(2+) as cofactor.

The enzyme catalyses adenosine(37) in tRNA + dimethylallyl diphosphate = N(6)-dimethylallyladenosine(37) in tRNA + diphosphate. Functionally, catalyzes the transfer of a dimethylallyl group onto the adenine at position 37 in tRNAs that read codons beginning with uridine, leading to the formation of N6-(dimethylallyl)adenosine (i(6)A). The protein is tRNA dimethylallyltransferase of Pseudomonas aeruginosa (strain LESB58).